A 171-amino-acid chain; its full sequence is Macro domain-containing protein RSc0334 (171 aa).

One can recognise a Macro domain in the interval 1–171 (MPIPTVTLRA…LYETALNEAR (171 aa)).

This sequence belongs to the MacroD-type family.

This Ralstonia nicotianae (strain ATCC BAA-1114 / GMI1000) (Ralstonia solanacearum) protein is Macro domain-containing protein RSc0334.